Consider the following 205-residue polypeptide: High frequency lysogenization protein HflD homolog (205 aa).

The protein belongs to the HflD family.

It is found in the cytoplasm. The protein resides in the cell inner membrane. This Aliivibrio fischeri (strain ATCC 700601 / ES114) (Vibrio fischeri) protein is High frequency lysogenization protein HflD homolog.